Here is a 147-residue protein sequence, read N- to C-terminus: Small ribosomal subunit protein uS12 (147 aa).

The protein belongs to the universal ribosomal protein uS12 family. As to quaternary structure, part of the 30S ribosomal subunit.

Functionally, with S4 and S5 plays an important role in translational accuracy. Located at the interface of the 30S and 50S subunits. In Thermococcus kodakarensis (strain ATCC BAA-918 / JCM 12380 / KOD1) (Pyrococcus kodakaraensis (strain KOD1)), this protein is Small ribosomal subunit protein uS12.